Reading from the N-terminus, the 130-residue chain is Small ribosomal subunit protein uS9 (130 aa).

Belongs to the universal ribosomal protein uS9 family.

In Syntrophobacter fumaroxidans (strain DSM 10017 / MPOB), this protein is Small ribosomal subunit protein uS9.